Reading from the N-terminus, the 171-residue chain is NADH-quinone oxidoreductase subunit I 1 (171 aa).

4Fe-4S ferredoxin-type domains lie at 39-71 (IVLT…LSKA) and 81-110 (EHFR…LTPD). Positions 51, 54, 57, 61, 90, 93, 96, and 100 each coordinate [4Fe-4S] cluster.

The protein belongs to the complex I 23 kDa subunit family. In terms of assembly, NDH-1 is composed of 14 different subunits. Subunits NuoA, H, J, K, L, M, N constitute the membrane sector of the complex. [4Fe-4S] cluster serves as cofactor.

It localises to the cell inner membrane. The catalysed reaction is a quinone + NADH + 5 H(+)(in) = a quinol + NAD(+) + 4 H(+)(out). Functionally, NDH-1 shuttles electrons from NADH, via FMN and iron-sulfur (Fe-S) centers, to quinones in the respiratory chain. The immediate electron acceptor for the enzyme in this species is believed to be ubiquinone. Couples the redox reaction to proton translocation (for every two electrons transferred, four hydrogen ions are translocated across the cytoplasmic membrane), and thus conserves the redox energy in a proton gradient. This Rhodopseudomonas palustris (strain HaA2) protein is NADH-quinone oxidoreductase subunit I 1.